We begin with the raw amino-acid sequence, 284 residues long: Succinate dehydrogenase [ubiquinone] iron-sulfur subunit, mitochondrial (284 aa).

The transit peptide at 1 to 26 (MAAVVFSLRRSGPVFRLPGVLQVCRG) directs the protein to the mitochondrion. The 2Fe-2S ferredoxin-type domain occupies 44–137 (KKFAIYRWDP…VSKIYPLPHM (94 aa)). The [2Fe-2S] cluster site is built by Cys97, Cys102, Cys105, and Cys117. The 4Fe-4S ferredoxin-type domain occupies 180-210 (DRDKLDGLYECILCACCSTSCPSYWWNADKY). 3 residues coordinate [4Fe-4S] cluster: Cys190, Cys193, and Cys196. Cys200 serves as a coordination point for [3Fe-4S] cluster. An a ubiquinone-binding site is contributed by Trp205. The [3Fe-4S] cluster site is built by Cys247 and Cys253. Cys257 contributes to the [4Fe-4S] cluster binding site.

This sequence belongs to the succinate dehydrogenase/fumarate reductase iron-sulfur protein family. In terms of assembly, component of complex II composed of four subunits: the flavoprotein (FP) sdha, iron-sulfur protein (IP) sdhb, and a cytochrome b composed of sdhc and sdhd. The cofactor is [2Fe-2S] cluster. [3Fe-4S] cluster serves as cofactor. [4Fe-4S] cluster is required as a cofactor.

The protein resides in the mitochondrion inner membrane. The enzyme catalyses a quinone + succinate = fumarate + a quinol. It carries out the reaction (R)-malate + a quinone = enol-oxaloacetate + a quinol. The catalysed reaction is (S)-malate + a quinone = enol-oxaloacetate + a quinol. It participates in carbohydrate metabolism; tricarboxylic acid cycle; fumarate from succinate (eukaryal route): step 1/1. Its activity is regulated as follows. Enol-oxaloacetate inhibits the succinate dehydrogenase activity. Its function is as follows. Iron-sulfur protein (IP) subunit of the succinate dehydrogenase complex (mitochondrial respiratory chain complex II), responsible for transferring electrons from succinate to ubiquinone (coenzyme Q). SDH also oxidizes malate to the non-canonical enol form of oxaloacetate, enol-oxaloacetate. Enol-oxaloacetate, which is a potent inhibitor of the succinate dehydrogenase activity, is further isomerized into keto-oxaloacetate. The chain is Succinate dehydrogenase [ubiquinone] iron-sulfur subunit, mitochondrial (sdhb) from Xenopus tropicalis (Western clawed frog).